We begin with the raw amino-acid sequence, 337 residues long: Glyceraldehyde-3-phosphate dehydrogenase (337 aa).

NAD(+)-binding positions include 12–13 (RI), aspartate 34, and arginine 79. D-glyceraldehyde 3-phosphate contacts are provided by residues 150–152 (SCT), threonine 181, 210–211 (TG), and arginine 233. Catalysis depends on cysteine 151, which acts as the Nucleophile. Asparagine 315 serves as a coordination point for NAD(+).

The protein belongs to the glyceraldehyde-3-phosphate dehydrogenase family. Homotetramer.

It is found in the cytoplasm. It catalyses the reaction D-glyceraldehyde 3-phosphate + phosphate + NAD(+) = (2R)-3-phospho-glyceroyl phosphate + NADH + H(+). The protein operates within carbohydrate degradation; glycolysis; pyruvate from D-glyceraldehyde 3-phosphate: step 1/5. The polypeptide is Glyceraldehyde-3-phosphate dehydrogenase (GPD) (Coccidioides posadasii (strain C735) (Valley fever fungus)).